Consider the following 135-residue polypeptide: Large ribosomal subunit protein uL16m (135 aa).

It belongs to the universal ribosomal protein uL16 family.

The protein resides in the mitochondrion. The polypeptide is Large ribosomal subunit protein uL16m (RPL16) (Prototheca wickerhamii).